A 405-amino-acid polypeptide reads, in one-letter code: Argininosuccinate synthase (405 aa).

Residues A10–S18 and A37 each bind ATP. Residues Y88 and S93 each coordinate L-citrulline. G118 is a binding site for ATP. L-aspartate is bound by residues T120, N124, and D125. N124 is a binding site for L-citrulline. L-citrulline is bound by residues R128, S179, S188, E264, and Y276.

Belongs to the argininosuccinate synthase family. Type 1 subfamily. As to quaternary structure, homotetramer.

Its subcellular location is the cytoplasm. It catalyses the reaction L-citrulline + L-aspartate + ATP = 2-(N(omega)-L-arginino)succinate + AMP + diphosphate + H(+). The protein operates within amino-acid biosynthesis; L-arginine biosynthesis; L-arginine from L-ornithine and carbamoyl phosphate: step 2/3. This is Argininosuccinate synthase from Pseudomonas savastanoi pv. phaseolicola (strain 1448A / Race 6) (Pseudomonas syringae pv. phaseolicola (strain 1448A / Race 6)).